A 482-amino-acid polypeptide reads, in one-letter code: Putative metabolite transport protein YfiG (482 aa).

The Cytoplasmic segment spans residues 1-29; that stretch reads MSTKKKEAVIGKESLAHKGLLRTITLVST. Residues 30–50 traverse the membrane as a helical segment; the sequence is FGGLLFGYDTGVINGALPFMA. The Extracellular segment spans residues 51-59; the sequence is TAGQLNLTP. The chain crosses the membrane as a helical span at residues 60-80; sequence VTEGLVASSLLLGAAFGAMFG. The Cytoplasmic segment spans residues 81–92; the sequence is GRLSDRHGRRKT. A helical transmembrane segment spans residues 93-113; it reads ILYLALLFIAATLGCTFSPNA. Residues 114 to 120 are Extracellular-facing; that stretch reads SVMIAFR. Residues 121–141 form a helical membrane-spanning segment; it reads FLLGLAVGCASVTVPTFLAEI. Residues 142–155 lie on the Cytoplasmic side of the membrane; the sequence is SPAERRGRIVTQNE. The chain crosses the membrane as a helical span at residues 156-176; the sequence is LMIVIGQLLAYTFNAIIGSTM. Topologically, residues 177-184 are extracellular; the sequence is GESANVWR. Residues 185–205 form a helical membrane-spanning segment; sequence YMLVIATLPAVVLWFGMLIVP. Topologically, residues 206 to 263 are cytoplasmic; sequence ESPRWLAAKGRMGDALRVLRQIREDSQAQQEIKEIKHAIEGTAKKAGFHDFQEPWIRR. Residues 264 to 284 traverse the membrane as a helical segment; sequence ILFIGIGIAIVQQITGVNSIM. The Extracellular portion of the chain corresponds to 285–301; it reads YYGTEILREAGFQTEAA. Residues 302 to 322 traverse the membrane as a helical segment; sequence LIGNIANGVISVIAVIFGIWL. Over 323–331 the chain is Cytoplasmic; it reads LGKVRRRPM. 2 helical membrane passes run 332-352 and 353-373; these read LIIG…LSIV and LEGT…FLAF. Over 374-400 the chain is Cytoplasmic; the sequence is QQTAISTVTWLMLSEIFPMHVRGLGMG. A helical membrane pass occupies residues 401 to 421; that stretch reads ISTFCLWTANFLIGFTFPILL. Topologically, residues 422-423 are extracellular; sequence NH. The chain crosses the membrane as a helical span at residues 424–444; sequence IGMSATFFIFVAMNILAILFV. Over 445 to 482 the chain is Cytoplasmic; it reads KKYVPETKGRSLEQLEHSFRQYGRRADQEIQNQTTHLS.

This sequence belongs to the major facilitator superfamily. Sugar transporter (TC 2.A.1.1) family.

The protein localises to the cell membrane. This is Putative metabolite transport protein YfiG (yfiG) from Bacillus subtilis (strain 168).